A 306-amino-acid polypeptide reads, in one-letter code: Glutaminase (306 aa).

Substrate is bound by residues Ser-61, Asn-111, Glu-155, Asn-162, Tyr-186, Tyr-238, and Val-256.

Belongs to the glutaminase family. In terms of assembly, homotetramer.

The catalysed reaction is L-glutamine + H2O = L-glutamate + NH4(+). This Pseudomonas entomophila (strain L48) protein is Glutaminase.